Consider the following 604-residue polypeptide: Zinc finger protein chinmo (604 aa).

The 67-residue stretch at 32–98 (ADVILSCDGV…MYKGEVHVSQ (67 aa)) folds into the BTB domain. Disordered regions lie at residues 122–155 (RLAA…SGGS), 291–310 (CDSL…GYTH), 330–437 (RSPY…DEST), and 450–470 (NLKY…TPNT). Over residues 364-374 (PSSSASSTAPT) the composition is skewed to low complexity. Positions 384–409 (ASPQSSRYENHSPSTTAGNGNATSSL) are enriched in polar residues. Residues 425 to 437 (ANDDDRELMDEST) are compositionally biased toward acidic residues. Low complexity predominate over residues 461–470 (SNTSSTTPNT). C2H2-type zinc fingers lie at residues 517–540 (LKCL…RQRH) and 545–568 (VPCP…AREH).

As to expression, broadly expressed in the developing larval central nervous system (at protein level). Expressed in the larval lymph gland and circulating hemocytes (at protein level). Expressed in all cell types of the adult testis stem cell niche but not detected in somatic cells of the adult ovary (at protein level). In the testis, expressed at high levels in cyst stem cells and early cyst cells and, at lower levels, in germline stem cells (at protein level).

It is found in the nucleus. Its function is as follows. Required for morphological differentiation of postmitotic neurons during postembryonic brain development. Ensures production of appropriate neuron subtypes within a lineage by preventing precocious generation of late neuronal types of that lineage. Acts as a downstream mediator of the transcriptional activator Stat92e and is required for the development of the eye-antennal disk which gives rise to the adult eye, antenna and head capsule, for transcriptional repression of the Notch receptor ligand Ser and for the self-renewal of cyst stem cells in the testis. In the adult testis, maintains the male identify of adult somatic cyst stem cells. Represses expression and alternative splicing of transformer pre-mRNA, resulting in the production of the male-specific isoform of transcription factor dsx which ensures male-specific transcription of target genes. Plays a role in actin nuclear localization through its involvement in repressing the expression of the kinase Cdi. This maintains the cofilin/actin-depolymerizing factor homolog tsr in its unphosphorylated state which is required for actin nuclear import. The sequence is that of Zinc finger protein chinmo from Drosophila melanogaster (Fruit fly).